Consider the following 363-residue polypeptide: MTLSTAQEIIEDIHQGKMVILMDDEDRENEGDLIIASDKVTPEAINFMATYGRGLICLTLNKERCLQLELPMMVKSNTDKFATPFTISIEAASGVTTGISVNDRARTVQAAIAATATAKDIVMPGHIFPLMAQDGGVLARAGHTEAGCDVARLAGLEPSSVIVEILNDDGTMARRPQLEVFAKKHGLKLGTVADLIEYRNKYETMIERISECKLNTEFGEFDMITYRDKINHQIHYALQKGNIEPNSQTLVRVHLQDTFKDILQTGSTRWTLPAAMERISSENGVLVIVTKQEDPEMVISKIQNLALENKETPVVNSQSRQVGLGSQILSDLGIRKMRLLSSSSHLYHSLSGFGLEIVEYVCS.

Residues 1 to 201 (MTLSTAQEII…VADLIEYRNK (201 aa)) form a DHBP synthase region. Residues 27–28 (RE), aspartate 32, 140–144 (RAGHT), and glutamate 164 each bind D-ribulose 5-phosphate. Residue glutamate 28 participates in Mg(2+) binding. Histidine 143 serves as a coordination point for Mg(2+). Residues 202 to 363 (YETMIERISE…GLEIVEYVCS (162 aa)) are GTP cyclohydrolase II-like.

In the N-terminal section; belongs to the DHBP synthase family. It in the C-terminal section; belongs to the GTP cyclohydrolase II family. It depends on Mg(2+) as a cofactor. The cofactor is Mn(2+).

It catalyses the reaction D-ribulose 5-phosphate = (2S)-2-hydroxy-3-oxobutyl phosphate + formate + H(+). The protein operates within cofactor biosynthesis; riboflavin biosynthesis; 2-hydroxy-3-oxobutyl phosphate from D-ribulose 5-phosphate: step 1/1. Its function is as follows. Catalyzes the conversion of D-ribulose 5-phosphate to formate and 3,4-dihydroxy-2-butanone 4-phosphate. This chain is 3,4-dihydroxy-2-butanone 4-phosphate synthase (ribB), found in Photobacterium phosphoreum.